Consider the following 257-residue polypeptide: Ig delta chain C region secreted form (257 aa).

Positions proline 5–threonine 105 constitute an Ig-like 1 domain. Cysteines 26 and 78 form a disulfide. N-linked (GlcNAc...) asparagine glycans are attached at residues asparagine 58 and asparagine 75. A disordered region spans residues proline 89 to lysine 111. Positions tryptophan 96–lysine 111 are enriched in polar residues. N-linked (GlcNAc...) asparagine glycans are attached at residues asparagine 112, asparagine 135, and asparagine 227. In terms of domain architecture, Ig-like 2 spans proline 133–alanine 233.

Cell lines producing IgD contain several mRNA species for Ig delta chains. In plasmacytomas, the secreted form is the major component, and the membrane-bound form is a minor component. In spleen, however, the membrane-bound form is the major component. These two forms differ in their C-terminal segments.

It is found in the secreted. This Mus musculus (Mouse) protein is Ig delta chain C region secreted form.